The chain runs to 202 residues: N-(5'-phosphoribosyl)anthranilate isomerase (202 aa).

It belongs to the TrpF family.

It catalyses the reaction N-(5-phospho-beta-D-ribosyl)anthranilate = 1-(2-carboxyphenylamino)-1-deoxy-D-ribulose 5-phosphate. The protein operates within amino-acid biosynthesis; L-tryptophan biosynthesis; L-tryptophan from chorismate: step 3/5. The polypeptide is N-(5'-phosphoribosyl)anthranilate isomerase (Listeria welshimeri serovar 6b (strain ATCC 35897 / DSM 20650 / CCUG 15529 / CIP 8149 / NCTC 11857 / SLCC 5334 / V8)).